Here is a 399-residue protein sequence, read N- to C-terminus: uncharacterized protein (399 aa).

Helical transmembrane passes span 6 to 26 (HLTF…LIIP), 27 to 47 (KGYN…FIPL), 60 to 80 (LIFS…INKD), 111 to 131 (ILYA…FQKF), 147 to 167 (MGNI…HFFI), 173 to 193 (STLF…LSGA), 195 to 215 (GGWI…KEFI), 220 to 240 (IITL…SPKF), 328 to 348 (GLVG…YFIK), and 362 to 382 (ILGI…SFLA).

The protein resides in the cell membrane. This is an uncharacterized protein from Haemophilus influenzae (strain ATCC 51907 / DSM 11121 / KW20 / Rd).